We begin with the raw amino-acid sequence, 345 residues long: Biotin synthase (345 aa).

The 228-residue stretch at 66-293 (NTVQLSTLLS…RAMVRLSAGR (228 aa)) folds into the Radical SAM core domain. [4Fe-4S] cluster is bound by residues Cys-81, Cys-85, and Cys-88. The [2Fe-2S] cluster site is built by Cys-125, Cys-156, Cys-216, and Arg-288.

The protein belongs to the radical SAM superfamily. Biotin synthase family. As to quaternary structure, homodimer. It depends on [4Fe-4S] cluster as a cofactor. [2Fe-2S] cluster is required as a cofactor.

It carries out the reaction (4R,5S)-dethiobiotin + (sulfur carrier)-SH + 2 reduced [2Fe-2S]-[ferredoxin] + 2 S-adenosyl-L-methionine = (sulfur carrier)-H + biotin + 2 5'-deoxyadenosine + 2 L-methionine + 2 oxidized [2Fe-2S]-[ferredoxin]. It functions in the pathway cofactor biosynthesis; biotin biosynthesis; biotin from 7,8-diaminononanoate: step 2/2. Its function is as follows. Catalyzes the conversion of dethiobiotin (DTB) to biotin by the insertion of a sulfur atom into dethiobiotin via a radical-based mechanism. This is Biotin synthase from Cupriavidus metallidurans (strain ATCC 43123 / DSM 2839 / NBRC 102507 / CH34) (Ralstonia metallidurans).